The following is a 493-amino-acid chain: MNSTSLYAAIDLGSNSFHMLVVREAAGSIQTLTRIKRKVRLAAGLNNDNHLSAEAMERGWQCLRLFAERLQDIPQPQIRVVATATLRLAVNAGEFIAKAQTILGCPVQVISGEEEARLIYQGVAHTTGGADQRLVVDIGGASTELVTGTGAQTTSLFSLSMGCVTWLERYFSDRNLAQENFDDAEKAARDVLRPVADELRFHGWKVCVGASGTVQALQEIMMAQGMDERITLAKLQQLKQRAIQCGRLEELEIEGLTLERALVFPSGLAILIAIFTELNIQSMTLAGGALREGLVYGMLHLAVDQDIRSRTLRNIQRRFIVDTDQANRVAKLADNFLKQVENAWHIEPISRELLLSACQLHEIGLSVDFKQAPYHAAYLVRHLDLPGYTPAQKKLLATLLLNQTNPVDLSSLHQQNAVPPRVAEQLCRLLRLAILFAGRRRDDLVPEITLQALNENLTLTLPSDWLAHHPLGKELIDQESQWQSYVHWPLDVR.

It belongs to the GppA/Ppx family. GppA subfamily.

The catalysed reaction is guanosine 3'-diphosphate 5'-triphosphate + H2O = guanosine 3',5'-bis(diphosphate) + phosphate + H(+). It participates in purine metabolism; ppGpp biosynthesis; ppGpp from GTP: step 2/2. Functionally, catalyzes the conversion of pppGpp to ppGpp. Guanosine pentaphosphate (pppGpp) is a cytoplasmic signaling molecule which together with ppGpp controls the 'stringent response', an adaptive process that allows bacteria to respond to amino acid starvation, resulting in the coordinated regulation of numerous cellular activities. The polypeptide is Guanosine-5'-triphosphate,3'-diphosphate pyrophosphatase (Salmonella paratyphi B (strain ATCC BAA-1250 / SPB7)).